A 67-amino-acid chain; its full sequence is DNA-directed RNA polymerase subunit Rpo10 (67 aa).

Residues Cys-7, Cys-10, Cys-44, and Cys-45 each contribute to the Zn(2+) site.

It belongs to the archaeal Rpo10/eukaryotic RPB10 RNA polymerase subunit family. Part of the RNA polymerase complex. The cofactor is Zn(2+).

It localises to the cytoplasm. It carries out the reaction RNA(n) + a ribonucleoside 5'-triphosphate = RNA(n+1) + diphosphate. DNA-dependent RNA polymerase (RNAP) catalyzes the transcription of DNA into RNA using the four ribonucleoside triphosphates as substrates. In Caldivirga maquilingensis (strain ATCC 700844 / DSM 13496 / JCM 10307 / IC-167), this protein is DNA-directed RNA polymerase subunit Rpo10.